Consider the following 141-residue polypeptide: GMSGSCTVKTCWMRLPSFRSVGDALKDRFDGASRVMVSNTDLEAPTQRNDAAPHRAPRRERYKLKLQPHNPDHKSPGSKDLVYLEPSPGFCEKNPRLGIPGTHGRACNDTSIGVDGCDLMCCGRGYRTETMFVVERCNCTF.

Ser3 carries the O-palmitoleoyl serine; by PORCN lipid modification. Polar residues predominate over residues 40 to 49 (TDLEAPTQRN). The tract at residues 40–61 (TDLEAPTQRNDAAPHRAPRRER) is disordered. Cys107 and Cys122 form a disulfide bridge. Asn108 and Asn138 each carry an N-linked (GlcNAc...) asparagine glycan.

This sequence belongs to the Wnt family. In terms of processing, palmitoleoylated by porcupine. The lipid group functions as a sorting signal, targeting the ligand to polarized vesicles that transport wg to unique sites at the cell surface. Depalmitoleoylated by notum, leading to inhibit Wnt signaling pathway.

It localises to the secreted. It is found in the extracellular space. Its subcellular location is the extracellular matrix. In terms of biological role, segment polarity protein. Binds to the frizzled seven-transmembrane receptors. This protein is probably a growth factor. In Manduca sexta (Tobacco hawkmoth), this protein is Protein wingless (WG).